The sequence spans 604 residues: Complement factor I (604 aa).

The N-terminal stretch at 1 to 18 (MKLALLILLLLNPHLSSS) is a signal peptide. Intrachain disulfides connect C36/C260, C46/C57, C51/C62, C64/C96, C70/C89, C78/C109, C144/C186, C157/C219, C191/C201, C234/C252, C246/C261, C264/C276, C271/C289, C283/C298, C349/C474, C387/C403, C395/C465, C488/C552, C516/C531, and C542/C571. N40 carries an N-linked (GlcNAc...) asparagine glycan. A Kazal-like domain is found at 58 to 111 (IEGTCACKLPYQCPKAGTPVCATNGRGYPTYCHLKSFECLHPEIKFSNNGTCTA). 3 N-linked (GlcNAc...) asparagine glycosylation sites follow: N106, N116, and N182. Residues 117-217 (VSLIYGSTDT…SKAPHGLAGV (101 aa)) enclose the SRCR domain. LDL-receptor class A domains lie at 218-262 (VCYT…LCCK) and 263-299 (GCRG…SGCE). Residues K244, D247, V249, D251, D257, and E258 each coordinate Ca(2+). Residues N284, E286, D288, D294, and E295 each coordinate Ca(2+). A Peptidase S1 domain is found at 362–595 (VVGGKPAEMG…YFDWISYYVG (234 aa)). Active-site charge relay system residues include H402 and D450. An N-linked (GlcNAc...) asparagine glycan is attached at N515. The active-site Charge relay system is S546. N557 carries an N-linked (GlcNAc...) asparagine glycan.

Belongs to the peptidase S1 family. Heterodimer of a light and heavy chains; disulfide-linked. The fully processed and mature protein circulates as a zymogen, and is allosterically activated by substrate-induced remodeling of the active site. Interacts with C3b. Interacts with complement factor H. As to expression, expressed in the liver by hepatocytes. Also present in other cells such as monocytes, fibroblasts or keratinocytes.

It localises to the secreted. The protein localises to the extracellular space. It catalyses the reaction Inactivates complement subcomponents C3b, iC3b and C4b by proteolytic cleavage.. In terms of biological role, trypsin-like serine protease that plays an essential role in regulating the immune response by controlling all complement pathways. Inhibits these pathways by cleaving three peptide bonds in the alpha-chain of C3b and two bonds in the alpha-chain of C4b thereby inactivating these proteins. Essential cofactors for these reactions include factor H and C4BP in the fluid phase and membrane cofactor protein/CD46 and CR1 on cell surfaces. The presence of these cofactors on healthy cells allows degradation of deposited C3b by CFI in order to prevent undesired complement activation, while in apoptotic cells or microbes, the absence of such cofactors leads to C3b-mediated complement activation and subsequent opsonization. This is Complement factor I (Cfi) from Rattus norvegicus (Rat).